Consider the following 316-residue polypeptide: Lys-63-specific deubiquitinase BRCC36 (316 aa).

Position 2 is an N-acetylalanine (A2). One can recognise an MPN domain in the interval 12 to 179 (VHLESDAFLV…YTCFQSIQAQ (168 aa)). Positions 122, 124, and 135 each coordinate Zn(2+). The short motif at 122 to 135 (HSHPHITVWPSHVD) is the JAMM motif element. S258 is modified (phosphoserine).

It belongs to the peptidase M67A family. BRCC36 subfamily. As to quaternary structure, component of the ARISC complex, at least composed of UIMC1/RAP80, ABRAXAS1, BRCC3/BRCC36, BABAM2 and BABAM1/NBA1. Component of the BRCA1-A complex, at least composed of BRCA1, BARD1, UIMC1/RAP80, ABRAXAS1, BRCC3/BRCC36, BABAM2 and BABAM1/NBA1. In the BRCA1-A complex, interacts directly with ABRAXAS1 and BABAM2. Component of the BRISC complex, at least composed of ABRAXAS2, BRCC3/BRCC36, BABAM2 and BABAM1/NBA1. Identified in a complex with SHMT2 and the other subunits of the BRISC complex. In the BRISC complex, interacts directly with ABRAXAS2. Identified in a complex with ABRAXAS2 and NUMA1. The BRISC complex interacts with the CSN complex. Component of the BRCA1/BRCA2 containing complex (BRCC), which also contains BRCA1, BRCA2, BARD1, BABAM2 and RAD51. BRCC is a ubiquitin E3 ligase complex that enhances cellular survival following DNA damage. Interacts with BRCA1. Binds polyubiquitin. Interacts with PWWP2B. Interacts with HDAC1; this interaction is enhanced in the presence of PWWP2B. Zn(2+) is required as a cofactor.

The protein localises to the nucleus. The protein resides in the cytoplasm. Its subcellular location is the cytoskeleton. It is found in the spindle pole. Functionally, metalloprotease that specifically cleaves 'Lys-63'-linked polyubiquitin chains. Does not have activity toward 'Lys-48'-linked polyubiquitin chains. Component of the BRCA1-A complex, a complex that specifically recognizes 'Lys-63'-linked ubiquitinated histones H2A and H2AX at DNA lesions sites, leading to target the BRCA1-BARD1 heterodimer to sites of DNA damage at double-strand breaks (DSBs). In the BRCA1-A complex, it specifically removes 'Lys-63'-linked ubiquitin on histones H2A and H2AX, antagonizing the RNF8-dependent ubiquitination at double-strand breaks (DSBs). Catalytic subunit of the BRISC complex, a multiprotein complex that specifically cleaves 'Lys-63'-linked ubiquitin in various substrates. Mediates the specific 'Lys-63'-specific deubiquitination associated with the COP9 signalosome complex (CSN), via the interaction of the BRISC complex with the CSN complex. The BRISC complex is required for normal mitotic spindle assembly and microtubule attachment to kinetochores via its role in deubiquitinating NUMA1. Plays a role in interferon signaling via its role in the deubiquitination of the interferon receptor IFNAR1; deubiquitination increases IFNAR1 activity by enhancing its stability and cell surface expression. Acts as a regulator of the NLRP3 inflammasome by mediating deubiquitination of NLRP3, leading to NLRP3 inflammasome assembly. Down-regulates the response to bacterial lipopolysaccharide (LPS) via its role in IFNAR1 deubiquitination. Deubiquitinates HDAC1 and PWWP2B leading to their stabilization. In Bos taurus (Bovine), this protein is Lys-63-specific deubiquitinase BRCC36 (BRCC3).